The following is a 109-amino-acid chain: Nucleoid-associated protein HD_0326 (109 aa).

This sequence belongs to the YbaB/EbfC family. As to quaternary structure, homodimer.

It is found in the cytoplasm. It localises to the nucleoid. Functionally, binds to DNA and alters its conformation. May be involved in regulation of gene expression, nucleoid organization and DNA protection. This is Nucleoid-associated protein HD_0326 from Haemophilus ducreyi (strain 35000HP / ATCC 700724).